The primary structure comprises 248 residues: UDP-N-acetyl-D-mannosaminuronic acid transferase (248 aa).

This sequence belongs to the glycosyltransferase 26 family.

The catalysed reaction is UDP-N-acetyl-alpha-D-mannosaminouronate + N-acetyl-alpha-D-glucosaminyl-di-trans,octa-cis-undecaprenyl diphosphate = beta-D-ManNAcA-(1-&gt;4)-alpha-D-GlcNAc-di-trans,octa-cis-undecaprenyl diphosphate + UDP + H(+). The protein operates within bacterial outer membrane biogenesis; enterobacterial common antigen biosynthesis. In terms of biological role, catalyzes the synthesis of Und-PP-GlcNAc-ManNAcA (Lipid II), the second lipid-linked intermediate involved in enterobacterial common antigen (ECA) synthesis. The chain is UDP-N-acetyl-D-mannosaminuronic acid transferase from Klebsiella pneumoniae subsp. pneumoniae (strain ATCC 700721 / MGH 78578).